A 359-amino-acid chain; its full sequence is MAGYARRPGVTPLSRARSLVIPDDDKLGDLEAANPFSFKEFLKTKNLSLSKEDTDSRVYSQEATRHSLGLDRTSPASQTVGYGLEYQQPFFEDPTGAGDLLDEDEDEEDGWNGAYLPSAMEQTHSSRVAASTSPCSTYVSFFSNPSELVGPESLPPWTLSDSDSRISPTGSPSADFTAHGESLGDRHLRTLQISYEALKDENSKLRRKLTEIQSFSETQTEMVRTLERKLEAKMIKEESDYHDLESVVQQVEQNLELMTKRAVKAENHVLKLRQEVSLLQAQVSDFKRENEALRSGQGASLTVVKQNTDVALQNLRVVMNNAHASIKQLVSGAETLNLVAEILKSIDRISEIKDQGEES.

A phosphoserine mark is found at Ser-18 and Ser-74. The segment at 100 to 125 (LLDEDEDEEDGWNGAYLPSAMEQTHS) is required for interaction with PTPN13. The interval 153–180 (SLPPWTLSDSDSRISPTGSPSADFTAHG) is disordered. A compositionally biased stretch (polar residues) spans 159-174 (LSDSDSRISPTGSPSA). Phosphoserine is present on residues Ser-167 and Ser-171. A coiled-coil region spans residues 185–295 (DRHLRTLQIS…FKRENEALRS (111 aa)).

Belongs to the ENTR1 family. Found in a complex with ENTR1, PTPN13 and GIT1. Interacts with PTPN13 (via the FERM domain). Interacts (via N-terminus) with GIT1 (via N- and C-terminus); this interaction is direct. Interacts with NOD2. Interacts (via N-terminus) with IFT88. Interacts with VPS35. Phosphorylated.

It is found in the cytoplasm. Its subcellular location is the early endosome. The protein resides in the endosome. It localises to the recycling endosome. The protein localises to the midbody. It is found in the cytoskeleton. Its subcellular location is the microtubule organizing center. The protein resides in the centrosome. It localises to the cilium basal body. Its function is as follows. Endosome-associated protein that plays a role in membrane receptor sorting, cytokinesis and ciliogenesis. Involved in the endosome-to-plasma membrane trafficking and recycling of SNX27-retromer-dependent cargo proteins, such as GLUT1. Involved in the regulation of cytokinesis; the function may involve PTPN13 and GIT1. Plays a role in the formation of cilia. Involved in cargo protein localization, such as PKD2, at primary cilia. Involved in the presentation of the tumor necrosis factor (TNF) receptor TNFRSF1A on the cell surface, and hence in the modulation of the TNF-induced apoptosis. The protein is Endosome-associated-trafficking regulator 1 of Bos taurus (Bovine).